Consider the following 652-residue polypeptide: DNA ligase (652 aa).

Residues aspartate 29–aspartate 33, serine 78–leucine 79, and glutamate 107 each bind NAD(+). Lysine 109 serves as the catalytic N6-AMP-lysine intermediate. The NAD(+) site is built by arginine 130, glutamate 164, lysine 278, and lysine 302. Zn(2+) is bound by residues cysteine 395, cysteine 398, cysteine 413, and cysteine 418. Positions asparagine 577–leucine 652 constitute a BRCT domain.

Belongs to the NAD-dependent DNA ligase family. LigA subfamily. Requires Mg(2+) as cofactor. Mn(2+) is required as a cofactor.

It catalyses the reaction NAD(+) + (deoxyribonucleotide)n-3'-hydroxyl + 5'-phospho-(deoxyribonucleotide)m = (deoxyribonucleotide)n+m + AMP + beta-nicotinamide D-nucleotide.. Functionally, DNA ligase that catalyzes the formation of phosphodiester linkages between 5'-phosphoryl and 3'-hydroxyl groups in double-stranded DNA using NAD as a coenzyme and as the energy source for the reaction. It is essential for DNA replication and repair of damaged DNA. This chain is DNA ligase, found in Streptococcus pyogenes serotype M49 (strain NZ131).